A 514-amino-acid polypeptide reads, in one-letter code: Efflux pump aflT (514 aa).

Helical transmembrane passes span 13–33 (ISGM…FCVA), 61–81 (SAYL…YALF), 85–105 (WVFL…GVAP), 116–136 (IAGV…AHIV), 146–166 (GLLG…GGAF), 174–194 (WCFY…LFLL), 218–238 (GTIV…WGGV), 247–267 (IIAL…IQVL), 289–309 (VFVF…PIWF), and 321–341 (GIDS…SGAV). An N-linked (GlcNAc...) asparagine glycan is attached at Asn-343. A run of 4 helical transmembrane segments spans residues 351–371 (WFIV…LFTV), 378–398 (WIGF…QGAV), 411–431 (IGTA…TSVA), and 485–505 (LDVF…AVGI).

It belongs to the major facilitator superfamily. TCR/Tet family.

It is found in the cell membrane. In terms of biological role, efflux pump; part of the gene cluster that mediates the biosynthesis of aflatoxins. This is Efflux pump aflT from Aspergillus parasiticus (strain ATCC 56775 / NRRL 5862 / SRRC 143 / SU-1).